The chain runs to 150 residues: Avidin-related protein 7 (150 aa).

The signal sequence occupies residues 1–24 (MVHATSPLLLLLLLSLALVAPGLS). An Avidin-like domain is found at 26–147 (RKCSLTGEWD…GYNNFTRQRT (122 aa)). An intrachain disulfide couples Cys28 to Cys105. Biotin contacts are provided by Asn36 and Ser40. Asn41 and Asn54 each carry an N-linked (GlcNAc...) asparagine glycan. Biotin contacts are provided by Tyr57, Thr59, and Asp63. The N-linked (GlcNAc...) asparagine glycan is linked to Asn93. Biotin contacts are provided by Ser95, Ser99, and Asn140. Asn141 is a glycosylation site (N-linked (GlcNAc...) asparagine).

It belongs to the avidin/streptavidin family. As to quaternary structure, homotetramer. Glycosylated.

It localises to the secreted. In terms of biological role, forms a strong non-covalent specific complex with biotin. The protein is Avidin-related protein 7 (AVR7) of Gallus gallus (Chicken).